The sequence spans 343 residues: F-box/kelch-repeat protein At3g08810 (343 aa).

The span at 1 to 15 (MSYPERKRKRSRWSK) shows a compositional bias: basic residues. The interval 1-25 (MSYPERKRKRSRWSKPHSTQNPSPS) is disordered. In terms of domain architecture, F-box spans 20–66 (QNPSPSLPDDVLLSIFARVSRLYYPTLSHVSESFRSLLASPELYKAR). 3 Kelch repeats span residues 134–181 (DIYN…VRDG), 183–224 (QGGH…LPDS), and 225–271 (YCVI…VILA).

The chain is F-box/kelch-repeat protein At3g08810 from Arabidopsis thaliana (Mouse-ear cress).